The chain runs to 272 residues: Orotidine 5'-phosphate decarboxylase (272 aa).

The Proton donor role is filled by Lys95.

It belongs to the OMP decarboxylase family. Type 2 subfamily.

It carries out the reaction orotidine 5'-phosphate + H(+) = UMP + CO2. The protein operates within pyrimidine metabolism; UMP biosynthesis via de novo pathway; UMP from orotate: step 2/2. The polypeptide is Orotidine 5'-phosphate decarboxylase (Bordetella petrii (strain ATCC BAA-461 / DSM 12804 / CCUG 43448)).